A 777-amino-acid polypeptide reads, in one-letter code: Glucocorticoid receptor (777 aa).

Residues 1 to 14 (MDSKESLTPGREEN) are compositionally biased toward basic and acidic residues. A disordered region spans residues 1 to 23 (MDSKESLTPGREENPSSVLAQER). A modulating region spans residues 1–420 (MDSKESLTPG…TATTGPPPKL (420 aa)). T8 bears the Phosphothreonine mark. An Omega-N-methylarginine modification is found at R23. 4 positions are modified to phosphoserine: S45, S113, S134, and S141. The segment covering 130–140 (NRSTSVPENPK) has biased composition (polar residues). Residues 130 to 183 (NRSTSVPENPKSSASTAVSAAPTEKEFPKTHSDISSEQQHLKGQTGTNGGNVKL) are disordered. Low complexity predominate over residues 141–150 (SSASTAVSAA). Positions 152 to 163 (TEKEFPKTHSDI) are enriched in basic and acidic residues. Over residues 164-174 (SSEQQHLKGQT) the composition is skewed to polar residues. 3 positions are modified to phosphoserine: S203, S211, and S226. K258 participates in a covalent cross-link: Glycyl lysine isopeptide (Lys-Gly) (interchain with G-Cter in SUMO2). Position 267 is a phosphoserine (S267). Residues K277 and K293 each participate in a glycyl lysine isopeptide (Lys-Gly) (interchain with G-Cter in SUMO); alternate cross-link. Residues K277 and K293 each participate in a glycyl lysine isopeptide (Lys-Gly) (interchain with G-Cter in SUMO2); alternate cross-link. Positions 394–414 (SSPSMRPDVSSPPSSSSTATT) are enriched in low complexity. The segment at 394–415 (SSPSMRPDVSSPPSSSSTATTG) is disordered. Phosphoserine is present on S404. K419 is covalently cross-linked (Glycyl lysine isopeptide (Lys-Gly) (interchain with G-Cter in ubiquitin)). 2 NR C4-type zinc fingers span residues 421–441 (CLVC…CGSC) and 457–476 (CAGR…CPAC). Residues 421-486 (CLVCSDEASG…RYRKCLQAGM (66 aa)) constitute a DNA-binding region (nuclear receptor). N6-acetyllysine is present on residues K480, K492, K494, and K495. Positions 485–777 (GMNLEARKTK…NIKKLLFHQK (293 aa)) are interaction with CLOCK. The interval 487–523 (NLEARKTKKKIKGIQQATTGVSQETPENPANKTIVPA) is hinge. Positions 524–758 (TLPQLTPTLV…FPEMLAEIIT (235 aa)) constitute an NR LBD domain. Residues 532 to 697 (LVSLLEVIEP…EIRMTYIKEL (166 aa)) are interaction with CRY1. A Glycyl lysine isopeptide (Lys-Gly) (interchain with G-Cter in SUMO) cross-link involves residue K703.

Belongs to the nuclear hormone receptor family. NR3 subfamily. As to quaternary structure, heteromultimeric cytoplasmic complex with HSP90AA1, HSPA1A/HSPA1B, and FKBP5 or another immunophilin such as PPID, STIP1, or the immunophilin homolog PPP5C. Upon ligand binding FKBP5 dissociates from the complex and FKBP4 takes its place, thereby linking the complex to dynein and mediating transport to the nucleus, where the complex dissociates. Probably forms a complex composed of chaperones HSP90 and HSP70, co-chaperones CDC37, PPP5C, TSC1 and client protein TSC2, CDK4, AKT, RAF1 and NR3C1; this complex does not contain co-chaperones STIP1/HOP and PTGES3/p23. Directly interacts with UNC45A. Binds to DNA as a homodimer, and as heterodimer with NR3C2 or the retinoid X receptor. Binds STAT5A and STAT5B homodimers and heterodimers. Interacts with NRIP1, POU2F1, POU2F2 and TRIM28. Interacts with several coactivator complexes, including the SMARCA4 complex, CREBBP/EP300, TADA2L (Ada complex) and p160 coactivators such as NCOA2 and NCOA6. Interaction with BAG1 inhibits transactivation. Interacts with HEXIM1 and TGFB1I1. Interacts with NCOA1. Interacts with NCOA3, SMARCA4, SMARCC1, SMARCD1, and SMARCE1. Interacts with CLOCK, CRY1 and CRY2 in a ligand-dependent fashion. Interacts with CIART. Interacts with RWDD3. Interacts with UBE2I/UBC9 and this interaction is enhanced in the presence of RWDD3. Interacts with GRIP1. Interacts with NR4A3 (via nuclear receptor DNA-binding domain), represses transcription activity of NR4A3 on the POMC promoter Nur response element (NurRE). Directly interacts with PNRC2 to attract and form a complex with UPF1 and DCP1A; the interaction leads to rapid mRNA degradation. Interacts with GSK3B. Interacts with FNIP1 and FNIP2. Interacts (via C-terminus) with HNRNPU (via C-terminus). Interacts with MCM3AP. Interacts (via domain NR LBD) with HSP90AA1 and HSP90AB1. In the absence of hormonal ligand, interacts with TACC1. Interacts (via NR LBD domain) with ZNF764 (via KRAB domain); the interaction regulates transcription factor activity of NR3C1 by directing its actions toward certain biologic pathways. Post-translationally, acetylation by CLOCK reduces its binding to glucocorticoid response elements and its transcriptional activity. In terms of processing, increased proteasome-mediated degradation in response to glucocorticoids. Phosphorylated in the absence of hormone; becomes hyperphosphorylated in the presence of glucocorticoid. The Ser-203, Ser-226 and Ser-404-phosphorylated forms are mainly cytoplasmic, and the Ser-211-phosphorylated form is nuclear. Phosphorylation at Ser-211 increases transcriptional activity. Phosphorylation at Ser-203, Ser-226 and Ser-404 decreases signaling capacity. Phosphorylation at Ser-404 may protect from glucocorticoid-induced apoptosis. Phosphorylation at Ser-203 and Ser-211 is not required in regulation of chromosome segregation. May be dephosphorylated by PPP5C, attenuates NR3C1 action. Post-translationally, ubiquitinated by UBR5, leading to its degradation: UBR5 specifically recognizes and binds ligand-bound NR3C1 when it is not associated with coactivators (NCOAs). In presence of NCOAs, the UBR5-degron is not accessible, preventing its ubiquitination and degradation. In terms of processing, sumoylation at Lys-277 and Lys-293 negatively regulates its transcriptional activity. Sumoylation at Lys-703 positively regulates its transcriptional activity in the presence of RWDD3. Sumoylation at Lys-277 and Lys-293 is dispensable whereas sumoylation at Lys-703 is critical for the stimulatory effect of RWDD3 on its transcriptional activity. Heat shock increases sumoylation in a RWDD3-dependent manner.

Its subcellular location is the cytoplasm. The protein resides in the nucleus. It is found in the mitochondrion. It localises to the cytoskeleton. The protein localises to the spindle. Its subcellular location is the microtubule organizing center. The protein resides in the centrosome. It is found in the chromosome. It localises to the nucleoplasm. Functionally, receptor for glucocorticoids (GC). Has a dual mode of action: as a transcription factor that binds to glucocorticoid response elements (GRE), both for nuclear and mitochondrial DNA, and as a modulator of other transcription factors. Affects inflammatory responses, cellular proliferation and differentiation in target tissues. Involved in chromatin remodeling. Plays a role in rapid mRNA degradation by binding to the 5' UTR of target mRNAs and interacting with PNRC2 in a ligand-dependent manner which recruits the RNA helicase UPF1 and the mRNA-decapping enzyme DCP1A, leading to RNA decay. Could act as a coactivator for STAT5-dependent transcription upon growth hormone (GH) stimulation and could reveal an essential role of hepatic GR in the control of body growth. Mediates glucocorticoid-induced apoptosis. Promotes accurate chromosome segregation during mitosis. May act as a tumor suppressor. May play a negative role in adipogenesis through the regulation of lipolytic and antilipogenic gene expression. The chain is Glucocorticoid receptor (NR3C1) from Pongo abelii (Sumatran orangutan).